Consider the following 123-residue polypeptide: Putative oocyte-secreted protein 1 homolog (123 aa).

The signal sequence occupies residues 1–26 (MKTILGFKGLFYLHSLIWTCAGDWSA).

Belongs to the PLAC1 family.

The protein resides in the secreted. Its function is as follows. May be involved in cell differentiation. This is Putative oocyte-secreted protein 1 homolog (OOSP1) from Homo sapiens (Human).